The sequence spans 310 residues: Upstream stimulatory factor 1 (310 aa).

Residues 1-17 (MKGQQKTAETEEGTVQI) are compositionally biased toward polar residues. 2 disordered regions span residues 1 to 26 (MKGQ…ATGE) and 171 to 209 (QGGS…EVER). The segment covering 194–209 (TTRDEKRRAQHNEVER) has biased composition (basic and acidic residues). The bHLH domain occupies 199–254 (KRRAQHNEVERRRRDKINNWIVQLSKIIPDCSMESTKSGQSKGGILSKACDYIQEL). The segment at 271 to 292 (LQLDNDVLRQQVEDLKNKNLLL) is leucine-zipper. Lys306 is covalently cross-linked (Glycyl lysine isopeptide (Lys-Gly) (interchain with G-Cter in SUMO2)).

Efficient DNA binding requires dimerization with another bHLH protein. Binds DNA as a homodimer or a heterodimer (USF1/USF2).

The protein resides in the nucleus. Functionally, transcription factor that binds to a symmetrical DNA sequence (E-boxes) (5'-CACGTG-3') that is found in a variety of viral and cellular promoters. Regulates the expression of the surfactant protein-A (SP-A) gene. The sequence is that of Upstream stimulatory factor 1 (USF1) from Oryctolagus cuniculus (Rabbit).